We begin with the raw amino-acid sequence, 598 residues long: Elongation factor 4 (598 aa).

Residues 4 to 185 (KNIRNFSIIA…TIITKIPAPK (182 aa)) form the tr-type G domain. Residues 16 to 21 (DHGKST) and 132 to 135 (NKID) each bind GTP.

The protein belongs to the TRAFAC class translation factor GTPase superfamily. Classic translation factor GTPase family. LepA subfamily.

The protein resides in the cell inner membrane. The catalysed reaction is GTP + H2O = GDP + phosphate + H(+). Required for accurate and efficient protein synthesis under certain stress conditions. May act as a fidelity factor of the translation reaction, by catalyzing a one-codon backward translocation of tRNAs on improperly translocated ribosomes. Back-translocation proceeds from a post-translocation (POST) complex to a pre-translocation (PRE) complex, thus giving elongation factor G a second chance to translocate the tRNAs correctly. Binds to ribosomes in a GTP-dependent manner. The chain is Elongation factor 4 from Campylobacter jejuni subsp. jejuni serotype O:2 (strain ATCC 700819 / NCTC 11168).